The sequence spans 240 residues: ATP-dependent dethiobiotin synthetase BioD (240 aa).

An ATP-binding site is contributed by 12 to 17 (EIGKTV). T16 serves as a coordination point for Mg(2+). Residue K37 is part of the active site. S41 is a binding site for substrate. ATP is bound by residues D54, 115–118 (EGSG), 179–180 (NQ), and 207–209 (PYI). Mg(2+) contacts are provided by D54 and E115.

This sequence belongs to the dethiobiotin synthetase family. In terms of assembly, homodimer. The cofactor is Mg(2+).

It localises to the cytoplasm. It carries out the reaction (7R,8S)-7,8-diammoniononanoate + CO2 + ATP = (4R,5S)-dethiobiotin + ADP + phosphate + 3 H(+). It participates in cofactor biosynthesis; biotin biosynthesis; biotin from 7,8-diaminononanoate: step 1/2. In terms of biological role, catalyzes a mechanistically unusual reaction, the ATP-dependent insertion of CO2 between the N7 and N8 nitrogen atoms of 7,8-diaminopelargonic acid (DAPA, also called 7,8-diammoniononanoate) to form a ureido ring. This is ATP-dependent dethiobiotin synthetase BioD from Clostridium acetobutylicum (strain ATCC 824 / DSM 792 / JCM 1419 / IAM 19013 / LMG 5710 / NBRC 13948 / NRRL B-527 / VKM B-1787 / 2291 / W).